Reading from the N-terminus, the 324-residue chain is Dioxygenase tasH (324 aa).

Residues 1–25 form the signal peptide; sequence MRSMSLWMLIGPVTGIATWASLRYA. 3 residues coordinate Zn(2+): H50, H96, and H284.

This sequence belongs to the DODA-type extradiol aromatic ring-opening dioxygenase family. In terms of assembly, monomer. It depends on Zn(2+) as a cofactor.

Its function is as follows. Dioxygenase; part of the gene cluster that mediates the biosynthesis of the tetramic acids Sch210971 and Sch210972, potential anti-HIV fungal natural product that contain a decalin core. The PKS module of tasS together with the enoylreductase tasC catalyze the formation of the polyketide unit which is then conjugated to 4-hydroxyl-4-methyl glutamate (HMG) by the condensation domain of the tasS NRPS module. One unique structural feature of Sch210971 and Sch210972 is the tetramic acid motif proposed to be derived from the non-proteinogenic amino acid HMG, by a Dieckmann-type condensation catalyzed by the reductase domain of tasS. The aldolase tasA catalyzes the aldol condensation of 2 molecules of pyruvic acid to yield the intermediate 4-hydroxyl-4-methyl-2-oxoglutarate (HMOG), which can then be stereoselectively transaminated, may be by tasG, to form HMG. The Diels-Alderase tas3 then uses the Dieckmann product of tasS as substrate and catalyzes the Diels-Alder cycloaddition to form the decalin ring of Sch210971 and Sch210972. The sequence is that of Dioxygenase tasH from Hapsidospora irregularis.